We begin with the raw amino-acid sequence, 530 residues long: Chaperonin GroEL (530 aa).

ATP contacts are provided by residues 30 to 33 (TLGP), Lys-51, 87 to 91 (DGTTT), Gly-415, and Asp-495.

This sequence belongs to the chaperonin (HSP60) family. As to quaternary structure, forms a cylinder of 14 subunits composed of two heptameric rings stacked back-to-back. Interacts with the co-chaperonin GroES.

The protein resides in the cytoplasm. It carries out the reaction ATP + H2O + a folded polypeptide = ADP + phosphate + an unfolded polypeptide.. Its function is as follows. Together with its co-chaperonin GroES, plays an essential role in assisting protein folding. The GroEL-GroES system forms a nano-cage that allows encapsulation of the non-native substrate proteins and provides a physical environment optimized to promote and accelerate protein folding. This Carsonella ruddii (strain PV) protein is Chaperonin GroEL.